The following is a 1195-amino-acid chain: Phosphatidylinositol-3,5-bisphosphate 3-phosphatase MTMR4 (1195 aa).

Position 8 is a phosphoserine (Ser-8). In terms of domain architecture, Myotubularin phosphatase spans 153–570 (EHIRCRQEAE…RALHLWTAVY (418 aa)). Asn-320, Asn-345, and Ile-346 together coordinate a 1,2-diacyl-sn-glycero-3-phospho-(1D-myo-inositol-3,5-bisphosphate). A 1,2-diacyl-sn-glycero-3-phospho-(1D-myo-inositol-3-phosphate)-binding residues include Asn-320, Asn-345, and Ile-346. Catalysis depends on Cys-407, which acts as the Phosphocysteine intermediate. A 1,2-diacyl-sn-glycero-3-phospho-(1D-myo-inositol-3,5-bisphosphate)-binding residues include Ser-408, Asp-409, Gly-410, Trp-411, Asp-412, Arg-413, Lys-449, and Arg-453. A 1,2-diacyl-sn-glycero-3-phospho-(1D-myo-inositol-3-phosphate)-binding residues include Ser-408, Asp-409, Gly-410, Trp-411, Asp-412, and Arg-413. Arg-453 lines the a 1,2-diacyl-sn-glycero-3-phospho-(1D-myo-inositol-3-phosphate) pocket. Phosphoserine occurs at positions 610 and 629. Disordered stretches follow at residues 645–756 (EPWH…EHCP), 780–800 (ESSQ…SMLG), and 827–877 (DPST…LLEN). Basic and acidic residues predominate over residues 720–729 (PEIKVLEETK). Composition is skewed to polar residues over residues 780-795 (ESSQ…QAQP) and 831-854 (DFLN…SSVP). Residues 1004 to 1008 (VPPLY) carry the PY-motif; substrate motif for NEDD4 motif. The stretch at 1023-1055 (HRLRQIEAGYKQEVEQLRRQVRELQMRLDIRHC) forms a coiled coil. The FYVE-type zinc-finger motif lies at 1114-1174 (DHMASHCYNC…VCNSCYEHIQ (61 aa)). The Zn(2+) site is built by Cys-1120, Cys-1123, Cys-1136, Cys-1139, Cys-1144, Cys-1147, Cys-1166, and Cys-1169.

The protein belongs to the protein-tyrosine phosphatase family. Non-receptor class myotubularin subfamily. As to quaternary structure, homooligomeric. Forms MTMR3:MTMR4 heterooligomers; regulates the localization of both proteins. The MTMR3:MTMR4 heterooligomer can also recruit both CEP55 and PLK1; occurs during early mitosis, regulates the phosphorylation of CEP55 by PLK1 and its recruitment to the midbody where it can mediate cell abscission. Interacts with SMAD2 and SMAD3; negatively regulates TGF-beta signaling through SMAD2 and SMAD3 dephosphorylation and retention in endosomes. Interacts with SMAD1; negatively regulates BMP signaling through SMAD1 dephosphorylation and retention in endosomes. In terms of processing, ubiquitinated. Ubiquitination by NEDD4 probably leads to proteasomal degradation. Phosphorylated by CDK1 during mitosis. Expressed in brain, heart, kidney, spleen, liver, colon, testis, muscle, placenta, thyroid gland, pancreas, ovary, prostate, skin, peripheral blood, and bone marrow.

It localises to the early endosome membrane. The protein localises to the recycling endosome membrane. It is found in the late endosome membrane. The protein resides in the cytoplasmic vesicle. Its subcellular location is the phagosome membrane. The enzyme catalyses a 1,2-diacyl-sn-glycero-3-phospho-(1D-myo-inositol-3-phosphate) + H2O = a 1,2-diacyl-sn-glycero-3-phospho-(1D-myo-inositol) + phosphate. It carries out the reaction a 1,2-diacyl-sn-glycero-3-phospho-(1D-myo-inositol-3,5-bisphosphate) + H2O = a 1,2-diacyl-sn-glycero-3-phospho-(1D-myo-inositol-5-phosphate) + phosphate. The catalysed reaction is 1,2-dioctanoyl-sn-glycero-3-phospho-(1-D-myo-inositol-3-phosphate) + H2O = 1,2-dioctanoyl-sn-glycero-3-phospho-(1D-myo-inositol) + phosphate. It catalyses the reaction 1,2-dioctanoyl-sn-glycero-3-phospho-(1D-myo-inositol-3,5-bisphosphate) + H2O = 1,2-dioctanoyl-sn-glycero-3-phospho-(1D-myo-inositol-5-phosphate) + phosphate. Its activity is regulated as follows. The phosphatidylinositol-3-phosphate phosphatase activity is inhibited by vanadate. Its function is as follows. Lipid phosphatase that specifically dephosphorylates the D-3 position of phosphatidylinositol 3-phosphate and phosphatidylinositol 3,5-bisphosphate, generating phosphatidylinositol and phosphatidylinositol 5-phosphate. Decreases the levels of phosphatidylinositol 3-phosphate, a phospholipid found in cell membranes where it acts as key regulator of both cell signaling and intracellular membrane traffic, in a subset of endosomal membranes to negatively regulate both endocytic recycling and trafficking and/or maturation of endosomes toward lysosomes. Through phosphatidylinositol 3-phosphate turnover in phagosome membranes regulates phagocytosis and phagosome maturation. By decreasing phosphatidylinositol 3-monophosphate (PI3P) levels in immune cells it can also regulate the innate immune response. Beside its lipid phosphatase activity, can also function as a molecular adapter to regulate midbody abscission during mitotic cytokinesis. Can also negatively regulate TGF-beta and BMP signaling through Smad proteins dephosphorylation and retention in endosomes. This chain is Phosphatidylinositol-3,5-bisphosphate 3-phosphatase MTMR4, found in Homo sapiens (Human).